A 169-amino-acid polypeptide reads, in one-letter code: uncharacterized protein (169 aa).

A Nudix hydrolase domain is found at 32-162; sequence CNFRVVNSFV…EPAKSDLIKL (131 aa). Residues 69–91 carry the Nudix box motif; sequence GGHVESGETYEDALQRELEEELN. Positions 85 and 89 each coordinate Mg(2+).

This sequence belongs to the Nudix hydrolase family. Requires Mg(2+) as cofactor.

This is an uncharacterized protein from Nostoc sp. (strain PCC 7120 / SAG 25.82 / UTEX 2576).